Reading from the N-terminus, the 72-residue chain is UPF0426 protein asl4034 (72 aa).

Belongs to the UPF0426 family.

The sequence is that of UPF0426 protein asl4034 from Nostoc sp. (strain PCC 7120 / SAG 25.82 / UTEX 2576).